The following is a 367-amino-acid chain: Peptide chain release factor 2 (367 aa).

Q254 bears the N5-methylglutamine mark.

The protein belongs to the prokaryotic/mitochondrial release factor family. Post-translationally, methylated by PrmC. Methylation increases the termination efficiency of RF2.

Its subcellular location is the cytoplasm. In terms of biological role, peptide chain release factor 2 directs the termination of translation in response to the peptide chain termination codons UGA and UAA. This chain is Peptide chain release factor 2, found in Acidovorax ebreus (strain TPSY) (Diaphorobacter sp. (strain TPSY)).